We begin with the raw amino-acid sequence, 314 residues long: Mevalonate kinase (314 aa).

103 to 109 (GLGTSAA) is a binding site for ATP. The Proton acceptor role is filled by D150.

Belongs to the GHMP kinase family. Mevalonate kinase subfamily. In terms of assembly, homodimer. Mg(2+) is required as a cofactor.

It is found in the cytoplasm. The enzyme catalyses (R)-mevalonate + ATP = (R)-5-phosphomevalonate + ADP + H(+). It participates in isoprenoid biosynthesis; isopentenyl diphosphate biosynthesis via mevalonate pathway; isopentenyl diphosphate from (R)-mevalonate: step 1/3. In terms of biological role, catalyzes the phosphorylation of (R)-mevalonate (MVA) to (R)-mevalonate 5-phosphate (MVAP). Functions in the mevalonate (MVA) pathway leading to isopentenyl diphosphate (IPP), a key precursor for the biosynthesis of isoprenoid compounds such as archaeal membrane lipids. The polypeptide is Mevalonate kinase (Saccharolobus solfataricus (strain ATCC 35092 / DSM 1617 / JCM 11322 / P2) (Sulfolobus solfataricus)).